Here is a 522-residue protein sequence, read N- to C-terminus: ATP synthase subunit alpha (522 aa).

176-183 (GDRQTGKT) is a binding site for ATP.

It belongs to the ATPase alpha/beta chains family. In terms of assembly, F-type ATPases have 2 components, CF(1) - the catalytic core - and CF(0) - the membrane proton channel. CF(1) has five subunits: alpha(3), beta(3), gamma(1), delta(1), epsilon(1). CF(0) has four main subunits: a(1), b(1), b'(1) and c(9-12).

It is found in the cell membrane. It catalyses the reaction ATP + H2O + 4 H(+)(in) = ADP + phosphate + 5 H(+)(out). Functionally, produces ATP from ADP in the presence of a proton gradient across the membrane. The alpha chain is a regulatory subunit. This chain is ATP synthase subunit alpha, found in Chloroflexus aurantiacus (strain ATCC 29366 / DSM 635 / J-10-fl).